We begin with the raw amino-acid sequence, 199 residues long: Recombination protein RecR (199 aa).

A C4-type zinc finger spans residues 57–72; it reads CSSCRTFTEESLCPIC. Positions 81-176 constitute a Toprim domain; it reads DLICVVETPA…NVSRIAHGVP (96 aa).

Belongs to the RecR family.

Its function is as follows. May play a role in DNA repair. It seems to be involved in an RecBC-independent recombinational process of DNA repair. It may act with RecF and RecO. In Shewanella loihica (strain ATCC BAA-1088 / PV-4), this protein is Recombination protein RecR.